Consider the following 278-residue polypeptide: Trans-2,3-dihydro-3-hydroxyanthranilate isomerase (278 aa).

Glu45 is a catalytic residue.

It belongs to the PhzF family.

It carries out the reaction (5S,6S)-6-amino-5-hydroxycyclohexa-1,3-diene-1-carboxyate = (1R,6S)-6-amino-5-oxocyclohex-2-ene-1-carboxylate. The protein operates within secondary metabolite biosynthesis; pyocyanine biosynthesis. Its function is as follows. Isomerase that catalyzes the condensation of two molecules of trans-2,3-dihydro-3-hydroxyanthranilic acid (DHHA) into the phenazine ring system. The final product is not yet known. This chain is Trans-2,3-dihydro-3-hydroxyanthranilate isomerase (phzF1), found in Pseudomonas aeruginosa (strain ATCC 15692 / DSM 22644 / CIP 104116 / JCM 14847 / LMG 12228 / 1C / PRS 101 / PAO1).